Consider the following 411-residue polypeptide: UPF0761 membrane protein PSPA7_4558 (411 aa).

6 helical membrane passes run 36 to 56 (LFAVVPMMTVMFSMLSLIPAF), 92 to 112 (HLTWVGVVFLAVTAFTMLVTI), 132 to 152 (FLLYWAILSLGPLLLGAGFAV), 174 to 194 (LLGLMPLAFSVAAFTLLYSAV), 207 to 229 (GGMFTAVLFEAAKTLFGLYVSLF), and 244 to 264 (IFLLWIYLSWMIVLFGAVLVC).

This sequence belongs to the UPF0761 family.

Its subcellular location is the cell inner membrane. This chain is UPF0761 membrane protein PSPA7_4558, found in Pseudomonas paraeruginosa (strain DSM 24068 / PA7) (Pseudomonas aeruginosa (strain PA7)).